Consider the following 445-residue polypeptide: Phosphoglucosamine mutase 1 (445 aa).

The active-site Phosphoserine intermediate is serine 102. Mg(2+) is bound by residues serine 102, aspartate 241, aspartate 243, and aspartate 245. The residue at position 102 (serine 102) is a Phosphoserine.

It belongs to the phosphohexose mutase family. The cofactor is Mg(2+). In terms of processing, activated by phosphorylation.

It carries out the reaction alpha-D-glucosamine 1-phosphate = D-glucosamine 6-phosphate. Catalyzes the conversion of glucosamine-6-phosphate to glucosamine-1-phosphate. The sequence is that of Phosphoglucosamine mutase 1 from Shewanella sp. (strain MR-4).